The following is a 614-amino-acid chain: Probable NOT transcription complex subunit VIP2 (614 aa).

Disordered stretches follow at residues 1 to 46 (MSNL…NLQG), 58 to 89 (NMQG…SSGR), and 361 to 391 (NLGA…GLRP). A compositionally biased stretch (polar residues) spans 364–381 (ATYSSHRPQQQPQHTSST).

The protein belongs to the CNOT2/3/5 family. Interacts with Agrobacterium tumefaciens VirE2. Binds to VIP1. Forms a complex made of Agrobacterium VirE2, VIP1, VIP2 and single-stranded DNA (ssDNA).

It localises to the nucleus. Its function is as follows. Transcriptional regulator required for Agrobacterium-mediated stable genetic transformation by T-DNA integration in host genome, but not for T-DNA transient expression. This chain is Probable NOT transcription complex subunit VIP2 (VIP2), found in Arabidopsis thaliana (Mouse-ear cress).